We begin with the raw amino-acid sequence, 192 residues long: Erythropoietin (192 aa).

Positions 1-26 (MGVRECPALLLLLSLLLPPLGLPALG) are cleaved as a signal peptide. Cystine bridges form between C33–C187 and C55–C59. N50 is a glycosylation site (N-linked (GlcNAc...) asparagine). 2 N-linked (GlcNAc...) asparagine glycosylation sites follow: N64 and N109.

Belongs to the EPO/TPO family.

It is found in the secreted. Hormone involved in the regulation of erythrocyte proliferation and differentiation and the maintenance of a physiological level of circulating erythrocyte mass. Binds to EPOR leading to EPOR dimerization and JAK2 activation thereby activating specific downstream effectors, including STAT1 and STAT3. The protein is Erythropoietin (EPO) of Equus caballus (Horse).